A 24-amino-acid polypeptide reads, in one-letter code: VIPFVASVAAEMMQHVYCAASRRC.

Cys-18 and Cys-24 are oxidised to a cystine.

As to expression, expressed by the skin glands.

It is found in the secreted. Antimicrobial peptide. This chain is Brevinin-1Ra, found in Pelophylax ridibundus (Marsh frog).